Here is a 192-residue protein sequence, read N- to C-terminus: Adenylate kinase (192 aa).

12–17 (GSGKTT) contacts ATP. The interval 34–63 (STGDLLRAEVASGSELGQTIKSYIDNGNLV) is NMP. Residues T35, R40, 61 to 63 (NLV), 88 to 91 (GFPR), and Q95 each bind AMP. The segment at 130–136 (GRARGAD) is LID. R131 is an ATP binding site. 2 residues coordinate AMP: R133 and R145. R173 serves as a coordination point for ATP.

It belongs to the adenylate kinase family. In terms of assembly, monomer.

The protein resides in the cytoplasm. It carries out the reaction AMP + ATP = 2 ADP. The protein operates within purine metabolism; AMP biosynthesis via salvage pathway; AMP from ADP: step 1/1. In terms of biological role, catalyzes the reversible transfer of the terminal phosphate group between ATP and AMP. Plays an important role in cellular energy homeostasis and in adenine nucleotide metabolism. The protein is Adenylate kinase of Nautilia profundicola (strain ATCC BAA-1463 / DSM 18972 / AmH).